The following is a 1071-amino-acid chain: Nonribosomal peptide synthetase flvI (1071 aa).

Residues 33-417 (RRVLEQHDAP…GSLHFISRKD (385 aa)) are adenylation. In terms of domain architecture, Carrier spans 552–628 (MPLTEIELKM…MLCQNIKTDV (77 aa)). At S589 the chain carries O-(pantetheine 4'-phosphoryl)serine. Positions 689–961 (NYTLRLEFKL…IDDRDIEQLS (273 aa)) are condensation.

This sequence belongs to the NRP synthetase family.

It catalyses the reaction (2S)-5,5-dimethylpiperidine-2-carboxylate + 10-hydroxy-pre-flavunoidine + ATP = flavunoidine + AMP + diphosphate + H(+). Its pathway is secondary metabolite biosynthesis; terpenoid biosynthesis. Functionally, nonribosomal peptide synthetase; part of the gene cluster that mediates the biosynthesis of flavunoidine, an alkaloidal terpenoid with a tetracyclic cage-like core connected to dimethylcadaverine via a C-N bond and acylated with 5,5-dimethyl-L-pipecolate. The tetracyclic core is synthesized by the terpene cyclase flvE and the cytochrome P450 monooxygenase flvD. The terpene cyclase flvE catalyzes the cyclization of farnesyl pyrophosphate (FPP) to form (1R,4R,5S)-(+)-acoradiene and the cytochrome P450 monooxygenase flvD is then responsible for oxidative conversion of (1R,4R,5S)-(+)-acoradiene into the tetracyclic cage present in the final product flavunoidine. In parallel, the N-methyltransferase flvH dimethylates L-lysine to give N,N-dimethyl-L-Lysin which is decarboxylated by flvG to afford dimethylcadaverine. The terpene cyclase-like protein flvF is the enzyme that attaches the dimethylcadaverine precusor at the C-7 of the tetracyclic cage to yield pre-flavunoidine. The cytochrome monooxygenase flvC hydroxylates the C-10 position of pre-flavunoidine whereas the NRPS flvI acylates the terpenoid core at the hydroxylated C-10 with dimethylpipecolate to yield final flavunoidine. The bifunctional enzyme flvA and the dehydrogenase flvB are responsible for the synthesis of the dimethylpipecolate precursor. The PLP-dependent lyase domain of flvA might use L-O-acetyl-homoserine and alpha-keto-isovalerate to form an intermediary ketone that can cyclize intramolecularly to yield an imine. The imine can be reduced by flvB to yield the 6-carboxylated pipecolate. The C-terminal alpha-KG-dependent oxygenase domain of flvA is then proposed to catalyze the decarboxylation to yield dimethylpipecolate. The polypeptide is Nonribosomal peptide synthetase flvI (Aspergillus flavus (strain ATCC 200026 / FGSC A1120 / IAM 13836 / NRRL 3357 / JCM 12722 / SRRC 167)).